Reading from the N-terminus, the 143-residue chain is Nucleoside diphosphate kinase (143 aa).

Residues Lys-11, Phe-59, Arg-87, Thr-93, Arg-104, and Asn-114 each contribute to the ATP site. The active-site Pros-phosphohistidine intermediate is His-117.

The protein belongs to the NDK family. Homotetramer. Requires Mg(2+) as cofactor.

It is found in the cytoplasm. It carries out the reaction a 2'-deoxyribonucleoside 5'-diphosphate + ATP = a 2'-deoxyribonucleoside 5'-triphosphate + ADP. It catalyses the reaction a ribonucleoside 5'-diphosphate + ATP = a ribonucleoside 5'-triphosphate + ADP. Major role in the synthesis of nucleoside triphosphates other than ATP. The ATP gamma phosphate is transferred to the NDP beta phosphate via a ping-pong mechanism, using a phosphorylated active-site intermediate. This chain is Nucleoside diphosphate kinase, found in Salmonella arizonae (strain ATCC BAA-731 / CDC346-86 / RSK2980).